The chain runs to 178 residues: Zinc finger protein ZAT11 (178 aa).

2 consecutive C2H2-type zinc fingers follow at residues 47–69 (FECK…RASH) and 94–116 (HKCS…MRRH).

In terms of tissue distribution, expressed in leaves.

The protein localises to the nucleus. In terms of biological role, probable transcription factor that may be involved in stress responses. This chain is Zinc finger protein ZAT11 (ZAT11), found in Arabidopsis thaliana (Mouse-ear cress).